Reading from the N-terminus, the 244-residue chain is MVILETPRVFLIASWGSEAVISAFTDALYRGVPWEEAVKAQAPDVIIKRISAFYRQGHWSVFEFMGAQFLVECSRACHTQFIRHRMASYWSESQRYVDYTKREIRFVVPKGFPADLLKRAYEDYARLREGFRPEYARMILPNATAVLFAVQMNARELLLNFAPLRCAYAAQAEIRHVCWQMFAHAWRLWPNLARLVWEDLPSLHRDFCTKVPRGEDCRLYAIKDAEEKHGPLPETPWLSALVHG.

Residues 7 to 199 (PRVFLIASWG…PNLARLVWED (193 aa)) form the ThyX domain. FAD is bound by residues serine 60 and 83–85 (RHR). Residues 80–83 (QFIR), 93–95 (SQR), and arginine 137 contribute to the dUMP site. The ThyX motif motif lies at 83–93 (RHRMASYWSES). FAD contacts are provided by residues 153–155 (NAR) and asparagine 160. Arginine 165 is a dUMP binding site. Arginine 165 serves as the catalytic Involved in ionization of N3 of dUMP, leading to its activation.

Belongs to the thymidylate synthase ThyX family. In terms of assembly, homotetramer. FAD serves as cofactor.

The enzyme catalyses dUMP + (6R)-5,10-methylene-5,6,7,8-tetrahydrofolate + NADPH + H(+) = dTMP + (6S)-5,6,7,8-tetrahydrofolate + NADP(+). It participates in pyrimidine metabolism; dTTP biosynthesis. Its function is as follows. Catalyzes the reductive methylation of 2'-deoxyuridine-5'-monophosphate (dUMP) to 2'-deoxythymidine-5'-monophosphate (dTMP) while utilizing 5,10-methylenetetrahydrofolate (mTHF) as the methyl donor, and NADPH and FADH(2) as the reductant. This Pyrobaculum aerophilum (strain ATCC 51768 / DSM 7523 / JCM 9630 / CIP 104966 / NBRC 100827 / IM2) protein is Flavin-dependent thymidylate synthase.